Here is a 338-residue protein sequence, read N- to C-terminus: RNA 3'-terminal phosphate cyclase (338 aa).

ATP is bound by residues Gln-103 and 283–287 (YLADQ). His-308 acts as the Tele-AMP-histidine intermediate in catalysis.

It belongs to the RNA 3'-terminal cyclase family. Type 1 subfamily.

The protein resides in the cytoplasm. The enzyme catalyses a 3'-end 3'-phospho-ribonucleotide-RNA + ATP = a 3'-end 2',3'-cyclophospho-ribonucleotide-RNA + AMP + diphosphate. In terms of biological role, catalyzes the conversion of 3'-phosphate to a 2',3'-cyclic phosphodiester at the end of RNA. The mechanism of action of the enzyme occurs in 3 steps: (A) adenylation of the enzyme by ATP; (B) transfer of adenylate to an RNA-N3'P to produce RNA-N3'PP5'A; (C) and attack of the adjacent 2'-hydroxyl on the 3'-phosphorus in the diester linkage to produce the cyclic end product. The biological role of this enzyme is unknown but it is likely to function in some aspects of cellular RNA processing. The protein is RNA 3'-terminal phosphate cyclase of Shigella boydii serotype 18 (strain CDC 3083-94 / BS512).